We begin with the raw amino-acid sequence, 667 residues long: Protein OS-9 (667 aa).

Positions 1–25 (MAAETLLSSLLGLLLLGLLLPASLT) are cleaved as a signal peptide. The MRH domain occupies 108–230 (APCLLKTKDW…TIRTPRLCPH (123 aa)). A disulfide bridge connects residues C110 and C123. W117, W118, and Q130 together coordinate a mannooligosaccharide derivative. N177 is a glycosylation site (N-linked (GlcNAc...) asparagine). Cystine bridges form between C181–C216 and C196–C228. D182, R188, E212, and Y218 together coordinate a mannooligosaccharide derivative. Disordered regions lie at residues 284–355 (WSET…NNVQ), 372–452 (LKGG…RDRL), 464–483 (LENIIQETEKELDPDGLKKE), 504–540 (LEEKQSPELVKKHKKKRVVPKKPPPSPQPTEEDPEHR), and 633–667 (AQKERQRQKELESNYRRVWGSPGGEGTGDLDEFDF). Basic and acidic residues-rich tracts occupy residues 302-311 (TKDDSKDSDF) and 396-412 (PQREPEKERGDPERQRE). The span at 413–429 (MEEEEDEDEDEDEDEDE) shows a compositional bias: acidic residues. Over residues 430–452 (RQLLGEFEKELEGILLPSDRDRL) the composition is skewed to basic and acidic residues. Residues 504 to 513 (LEEKQSPELV) show a composition bias toward basic and acidic residues. The span at 514–523 (KKHKKKRVVP) shows a compositional bias: basic residues. Residues 633–647 (AQKERQRQKELESNY) are compositionally biased toward basic and acidic residues.

The protein belongs to the OS-9 family. In terms of assembly, component of the HRD1 complex, which comprises at least SYNV1/HRD1, DERL1/2, FAM8A1, HERPUD1/HERP, OS9, SEL1L and UBE2J1. FAM8A1 is stabilized by interaction with SYNV1, which prevents its proteasomal degradation. OS9 and UBE2J1 recruitment to the complex may be mediated by SEL1L. Through this complex, may interact with ERLEC1 and HSPA5. Interacts (via C-terminus) with CPNE6 (via second C2 domain); this interaction occurs in a calcium-dependent manner in vitro. Interacts with CREB3. In terms of processing, intramolecular disulfide bonds. Post-translationally, isoform 1 and isoform 2 are N-glycosylated. In terms of tissue distribution, ubiquitously expressed. Found as well in all tumor cell lines analyzed, amplified in sarcomas. Highly expressed in osteosarcoma SJSA-1 and rhabdomyosarcoma Rh30 cell lines. As to expression, isoform 2 is the major isoform detected in all cell types examined.

It is found in the endoplasmic reticulum lumen. In terms of biological role, lectin component of the HRD1 complex, which functions in endoplasmic reticulum (ER) quality control and ER-associated degradation (ERAD). Specifically recognizes and binds improperly folded glycoproteins as well as hyperglycosylated proteins, retain them in the ER, and transfers them to the ubiquitination machinery and promote their degradation. Possible targets include TRPV4 as well as hyperglycosylated HSP90B1. The polypeptide is Protein OS-9 (OS9) (Homo sapiens (Human)).